A 128-amino-acid chain; its full sequence is Tachykinin-4 (128 aa).

The signal sequence occupies residues 1-16 (MLPLLALLLLIGPSVC). Residues 17–54 (TTAGDREELAFGAEAESWVTVNLKGIPVPSIELKLQEL) constitute a propeptide that is removed on maturation. M66 is modified (methionine amide). Positions 69-128 (RVGGYQLGRIVQDLLGTRGLSIEGTCRQAASQQRARPGAVTRESLQSREEDEAPLTTSNV) are excised as a propeptide. The segment at 96-128 (QAASQQRARPGAVTRESLQSREEDEAPLTTSNV) is disordered.

The protein belongs to the tachykinin family. In terms of tissue distribution, expressed in hematopoietic cells with highest levels in pre- and pro-B cells but not in later developmental stages. Also detected in uterus, skeletal muscle, brain, spleen, stomach, skin and lactating mammary gland and in cells of myeloid lineage including dendritic and microglial cells and macrophages. In uterus, highest expression is observed in non-pregnant diestrus mice and in day 5 pregnant mice. Compared with mice in diestrus, decreases 2.6-fold in uteri from non-pregnant mice in estrus and 10.2-fold in day 17 pregnant mice. Detected at sites of chronic inflammation such as granulomas.

It is found in the secreted. Its function is as follows. Tachykinins are active peptides which excite neurons, evoke behavioral responses, are potent vasodilators and secretagogues, and contract (directly or indirectly) many smooth muscles. Hemokinin induces plasma extravasation, mast cell degranulation, muscle contraction, salivary secretion and scratching behavior. Increases sperm motility. Induces potent analgesic effects and may play a role in pain modulation. Promotes survival of bone marrow B lineage cells and of cultured LPS-stimulated pre-B cells and may act as an autocrine factor required for B-cell survival and proliferation. Lowers systemic arterial pressure following intravenous injection. Induces interferon-gamma production and may play a role in the inflammatory response. Shows potent affinity and specificity for the NK-1 receptor. The chain is Tachykinin-4 from Mus musculus (Mouse).